A 436-amino-acid chain; its full sequence is Cyclic GMP-AMP synthase (436 aa).

Residue Q112–Y117 coordinates GTP. Positions 131 and 133 each coordinate Mg(2+). ATP is bound at residue R182. Mg(2+) is bound at residue D193. Position 259 (S259) interacts with ATP. The GTP site is built by K287, S301, and D348. Disordered regions lie at residues R339–K358 and A417–G436. Polar residues predominate over residues E419 to G436. G436 participates in a covalent cross-link: Glycyl lysine isopeptide (Gly-Lys) (interchain with K-? in acceptor proteins).

The protein belongs to the CD-NTase family. A01 subfamily. As to quaternary structure, monomer. Interacts with Cap2 in the presence and absence of phage T2. A Cap2 dimer is bound on either side by a DncV monomer. Mg(2+) serves as cofactor. Post-translationally, in bacteria expressing capV-cdnD-cap2, this protein is conjugated to a number of other proteins (by Cap2 via this protein's C-terminal Gly residue), many of which are involved in metabolism. More conjugated protein is found in the absence of Cap3.

It carries out the reaction GTP + ATP = 3',3'-cGAMP + 2 diphosphate. Primed for activation by Cap2 which conjugates it to cellular proteins; priming is target protein-specific (green fluorescent protein does not activate the enzyme), but which protein(s) activate is unclear. Enzymatic activity of DncV is inhibited by folate-like molecules, such as 5-methyltetrahydrofolate di-glutamate and 5-methyltetrahydrofolate, suggesting the existence of a signaling pathway that links folate-like metabolism cofactors to the regulation of cyclic dinucleotide second messenger synthesis. Lacks a regulatory loop and is constitutively activated. Functionally, cyclic nucleotide synthase (second messenger synthase) of a CBASS antivirus system. CBASS (cyclic oligonucleotide-based antiphage signaling system) provides immunity against bacteriophages. The CD-NTase protein (DncV, this protein) synthesizes cyclic nucleotides in response to infection; these serve as specific second messenger signals. The signals activate a diverse range of effectors, leading to bacterial cell death and thus abortive phage infection. A type II-A(GA) CBASS system. Its function is as follows. Catalyzes the synthesis of 3',3'-cyclic GMP-AMP (cGAMP), a second messenger in cell signal transduction, from GTP and ATP in response to phage infection. Also able to produce c-di-AMP and c-di-GMP from ATP and GTP, respectively; however, cGAMP is the dominant molecule produced by DncV in vivo, contrary to the 2'3'-cGAMP produced by eukaryotes. Is required for efficient V.cholerae intestinal colonization, and down-regulates the colonization-influencing process of chemotaxis. Is not active with dATP, TTP, UTP or CTP. Its product controls the activity of cGAMP-activated phospholipase CapV, a patatin-like lipase that is a direct cGAMP receptor encoded in the dncV operon. Protects E.coli against phage infection. When the CBASS operon (capV-dncV-cap2-cap3) is introduced in E.coli MG1655 there is about 100-fold protection against phages P1 and T2. When the operon is introduced in E.coli MG1655 there is a more than 10(3) decrease in the efficiency of T2 plaque formation. Protects 100-fold against phage T5, offers no protection against T7. When the operon is introduced in E.coli MG1655 it protects against phages T2, T4, T5 and T6. Another paper shows the operon confers protection against phages P1, T2, T5 and T6 but not T4 or lambda. The polypeptide is Cyclic GMP-AMP synthase (Vibrio cholerae serotype O1 (strain ATCC 39315 / El Tor Inaba N16961)).